The sequence spans 353 residues: Chorismate synthase (353 aa).

Residues Arg-48 and Arg-54 each coordinate NADP(+). FMN contacts are provided by residues 125-127, 238-239, Gly-278, 293-297, and Arg-319; these read RSS, NA, and KPTSS.

Belongs to the chorismate synthase family. In terms of assembly, homotetramer. Requires FMNH2 as cofactor.

The catalysed reaction is 5-O-(1-carboxyvinyl)-3-phosphoshikimate = chorismate + phosphate. It functions in the pathway metabolic intermediate biosynthesis; chorismate biosynthesis; chorismate from D-erythrose 4-phosphate and phosphoenolpyruvate: step 7/7. In terms of biological role, catalyzes the anti-1,4-elimination of the C-3 phosphate and the C-6 proR hydrogen from 5-enolpyruvylshikimate-3-phosphate (EPSP) to yield chorismate, which is the branch point compound that serves as the starting substrate for the three terminal pathways of aromatic amino acid biosynthesis. This reaction introduces a second double bond into the aromatic ring system. This Bordetella parapertussis (strain 12822 / ATCC BAA-587 / NCTC 13253) protein is Chorismate synthase.